We begin with the raw amino-acid sequence, 149 residues long: Calmodulin (149 aa).

At Ala2 the chain carries N-acetylalanine. EF-hand domains follow at residues 8–43 (EQIA…LGQN), 44–79 (PTEA…KMKD), 81–116 (DSEE…LGEK), and 117–149 (LTDE…MTSK). 14 residues coordinate Ca(2+): Asp21, Asp23, Asp25, Thr27, Glu32, Asp57, Asp59, Asn61, Thr63, Glu68, Asp94, Asp96, Asn98, and Glu105. Lys116 carries the N6,N6,N6-trimethyllysine modification. Asp130, Asp132, Asp134, Gln136, and Glu141 together coordinate Ca(2+).

It belongs to the calmodulin family.

Calmodulin mediates the control of a large number of enzymes, ion channels and other proteins by Ca(2+). Among the enzymes to be stimulated by the calmodulin-Ca(2+) complex are a number of protein kinases and phosphatases. In Metridium senile (Brown sea anemone), this protein is Calmodulin.